Reading from the N-terminus, the 553-residue chain is MTKYVFVTGGVVSSLGKGIAAASLAAILESRGLKVTLLKLDPYINVDPGTMSPLQHGEVFVTEDGAETDLDLGHYERFVSAKMRKSNNFTTGQIYESVISKERRGEYLGKTVQVIPHITNEIQAFVERGAKASHDGKADVAICEIGGTVGDIESLPFLEAARQMSLRLPLHSCAFVHLTLVPFISSAGELKTKPTQHSVQKLREIGIMPTVLLCRADRPIPNDERAKISLFSNVREEAVISVWDVDTIYKIPEMLQAQGMDDLICRELELNAKPADLSVWANLVYELANPKHEVTIGMVGKYVELTESYKSLIEALRHAGIHTHTRVNITYIDSEDIEKEGIDCLKDLDAILVPGGFGKRGTEGKIAAIRYARENQVPYLGICLGMQLAVIEFARHVANIVQANSTEFDADTESPVVALITEWLDREGRVEKRTNASDLGGTMRLGSQRCPVKPGTLAHRIYGAEVNERHRHRYEVNNTYVPKLEQSGLVISARTPNEMLPEMMELPDSMHPWFFGVQFHPEFTSTPRDGHPLFSAFIKAALIHQDATLKQVS.

The segment at 1-270 is amidoligase domain; that stretch reads MTKYVFVTGG…DDLICRELEL (270 aa). S13 contacts CTP. S13 contacts UTP. Residues 14-19 and D71 contribute to the ATP site; that span reads SLGKGI. Mg(2+) contacts are provided by D71 and E144. CTP-binding positions include 151–153, 191–196, and K227; these read DIE and KTKPTQ. UTP contacts are provided by residues 191–196 and K227; that span reads KTKPTQ. In terms of domain architecture, Glutamine amidotransferase type-1 spans 295–547; sequence TIGMVGKYVE…IKAALIHQDA (253 aa). G356 is a binding site for L-glutamine. C383 serves as the catalytic Nucleophile; for glutamine hydrolysis. Residues 384-387, E407, and R473 each bind L-glutamine; that span reads LGMQ. Residues H520 and E522 contribute to the active site.

The protein belongs to the CTP synthase family. As to quaternary structure, homotetramer.

It catalyses the reaction UTP + L-glutamine + ATP + H2O = CTP + L-glutamate + ADP + phosphate + 2 H(+). The catalysed reaction is L-glutamine + H2O = L-glutamate + NH4(+). It carries out the reaction UTP + NH4(+) + ATP = CTP + ADP + phosphate + 2 H(+). The protein operates within pyrimidine metabolism; CTP biosynthesis via de novo pathway; CTP from UDP: step 2/2. With respect to regulation, allosterically activated by GTP, when glutamine is the substrate; GTP has no effect on the reaction when ammonia is the substrate. The allosteric effector GTP functions by stabilizing the protein conformation that binds the tetrahedral intermediate(s) formed during glutamine hydrolysis. Inhibited by the product CTP, via allosteric rather than competitive inhibition. Catalyzes the ATP-dependent amination of UTP to CTP with either L-glutamine or ammonia as the source of nitrogen. Regulates intracellular CTP levels through interactions with the four ribonucleotide triphosphates. The protein is CTP synthase of Polynucleobacter asymbioticus (strain DSM 18221 / CIP 109841 / QLW-P1DMWA-1) (Polynucleobacter necessarius subsp. asymbioticus).